The chain runs to 101 residues: Protein RnfH (101 aa).

This sequence belongs to the UPF0125 (RnfH) family.

This is Protein RnfH from Pseudomonas aeruginosa (strain LESB58).